Consider the following 689-residue polypeptide: Glycine--tRNA ligase beta subunit (689 aa).

This sequence belongs to the class-II aminoacyl-tRNA synthetase family. As to quaternary structure, tetramer of two alpha and two beta subunits.

Its subcellular location is the cytoplasm. It catalyses the reaction tRNA(Gly) + glycine + ATP = glycyl-tRNA(Gly) + AMP + diphosphate. This is Glycine--tRNA ligase beta subunit from Coxiella burnetii (strain Dugway 5J108-111).